The chain runs to 155 residues: Aspartate 1-decarboxylase (155 aa).

Ser24 functions as the Schiff-base intermediate with substrate; via pyruvic acid in the catalytic mechanism. Pyruvic acid (Ser) is present on Ser24. Residue Thr56 participates in substrate binding. Catalysis depends on Tyr57, which acts as the Proton donor. Residue 72 to 74 coordinates substrate; sequence GAA.

It belongs to the PanD family. As to quaternary structure, heterooctamer of four alpha and four beta subunits. It depends on pyruvate as a cofactor. Post-translationally, is synthesized initially as an inactive proenzyme, which is activated by self-cleavage at a specific serine bond to produce a beta-subunit with a hydroxyl group at its C-terminus and an alpha-subunit with a pyruvoyl group at its N-terminus.

The protein resides in the cytoplasm. It catalyses the reaction L-aspartate + H(+) = beta-alanine + CO2. Its pathway is cofactor biosynthesis; (R)-pantothenate biosynthesis; beta-alanine from L-aspartate: step 1/1. Its function is as follows. Catalyzes the pyruvoyl-dependent decarboxylation of aspartate to produce beta-alanine. This Agrobacterium fabrum (strain C58 / ATCC 33970) (Agrobacterium tumefaciens (strain C58)) protein is Aspartate 1-decarboxylase.